The chain runs to 338 residues: RNA 3'-terminal phosphate cyclase (338 aa).

ATP-binding positions include Q103 and 283-287; that span reads YLADQ. Residue H308 is the Tele-AMP-histidine intermediate of the active site.

This sequence belongs to the RNA 3'-terminal cyclase family. Type 1 subfamily.

It localises to the cytoplasm. It catalyses the reaction a 3'-end 3'-phospho-ribonucleotide-RNA + ATP = a 3'-end 2',3'-cyclophospho-ribonucleotide-RNA + AMP + diphosphate. Functionally, catalyzes the conversion of 3'-phosphate to a 2',3'-cyclic phosphodiester at the end of RNA. The mechanism of action of the enzyme occurs in 3 steps: (A) adenylation of the enzyme by ATP; (B) transfer of adenylate to an RNA-N3'P to produce RNA-N3'PP5'A; (C) and attack of the adjacent 2'-hydroxyl on the 3'-phosphorus in the diester linkage to produce the cyclic end product. The biological role of this enzyme is unknown but it is likely to function in some aspects of cellular RNA processing. The polypeptide is RNA 3'-terminal phosphate cyclase (Shigella boydii serotype 4 (strain Sb227)).